A 580-amino-acid polypeptide reads, in one-letter code: Tricyclene synthase TPS4, chloroplastic (580 aa).

The N-terminal 41 residues, 1–41 (MLLNSSFISLPSFFKSQELGRTNLLIHRNGSPLLCYATNTN), are a transit peptide targeting the chloroplast. 5 residues coordinate (2E)-geranyl diphosphate: arginine 296, aspartate 334, aspartate 338, arginine 475, and asparagine 478. The Mg(2+) site is built by aspartate 334 and aspartate 338. Residues 334–338 (DDIYD) carry the DDXXD motif motif. Mg(2+) contacts are provided by asparagine 478, threonine 482, and glutamate 486.

It belongs to the terpene synthase family. Tpsb subfamily. Mg(2+) serves as cofactor. It depends on Mn(2+) as a cofactor. In terms of tissue distribution, expressed in leaves.

The protein localises to the plastid. It is found in the chloroplast stroma. The enzyme catalyses (2E)-geranyl diphosphate = tricyclene + diphosphate. It catalyses the reaction (2E)-geranyl diphosphate = (E)-beta-ocimene + diphosphate. The protein operates within secondary metabolite biosynthesis; terpenoid biosynthesis. Promotes the emission of terpenes volatile organic compounds (VOC) in response to damage mediated by arthropod herbivores (e.g. Spodoptera exigua), probably to attract natural enemies of the herbivores. The sequence is that of Tricyclene synthase TPS4, chloroplastic (TPS4) from Medicago truncatula (Barrel medic).